The chain runs to 141 residues: Large ribosomal subunit protein uL16 (141 aa).

This sequence belongs to the universal ribosomal protein uL16 family. In terms of assembly, part of the 50S ribosomal subunit.

Binds 23S rRNA and is also seen to make contacts with the A and possibly P site tRNAs. This chain is Large ribosomal subunit protein uL16, found in Campylobacter fetus subsp. fetus (strain 82-40).